The following is a 736-amino-acid chain: 1,4-alpha-glucan branching enzyme GlgB (736 aa).

Asp419 serves as the catalytic Nucleophile. Residue Glu472 is the Proton donor of the active site.

It belongs to the glycosyl hydrolase 13 family. GlgB subfamily. Monomer.

The catalysed reaction is Transfers a segment of a (1-&gt;4)-alpha-D-glucan chain to a primary hydroxy group in a similar glucan chain.. It functions in the pathway glycan biosynthesis; glycogen biosynthesis. Catalyzes the formation of the alpha-1,6-glucosidic linkages in glycogen by scission of a 1,4-alpha-linked oligosaccharide from growing alpha-1,4-glucan chains and the subsequent attachment of the oligosaccharide to the alpha-1,6 position. This is 1,4-alpha-glucan branching enzyme GlgB from Rhizobium meliloti (strain 1021) (Ensifer meliloti).